The primary structure comprises 287 residues: Protein HEXIM2 (287 aa).

2 disordered regions span residues 1-212 (MKDW…RSKE) and 266-287 (RLRQENEMWNREGGRRGGQPGS). Position 31 is a phosphoserine (serine 31). Threonine 34 and threonine 48 each carry phosphothreonine. Phosphoserine is present on residues serine 53, serine 55, serine 73, serine 78, and serine 83. Basic residues predominate over residues 89–105 (ARKKHRRRPSKRKRHWR). The segment covering 115-134 (KQQRDERQSQRASRVREEMF) has biased composition (basic and acidic residues). Positions 142–145 (PYNT) are interaction with P-TEFb. Composition is skewed to basic and acidic residues over residues 181–212 (GQGRARGEFQQKDFSEAYERYHTESLQGRSKE) and 266–280 (RLRQENEMWNREGGR). Positions 208 to 278 (GRSKEELVRD…QENEMWNREG (71 aa)) form a coiled coil. Residues 227 to 287 (QAEEEMRRLR…GGRRGGQPGS (61 aa)) are interaction with CCNT1, HEXIM1 and HEXIM2.

The protein belongs to the HEXIM family. In terms of assembly, homooligomer and heterooligomer with HEXIM1; probably dimeric. Core component of the 7SK RNP complex, at least composed of 7SK RNA, LARP7, MEPCE, HEXIM1 (or HEXIM2) and P-TEFb (composed of CDK9 and CCNT1/cyclin-T1). Interacts with CCNT2.

It localises to the nucleus. Its function is as follows. Transcriptional regulator which functions as a general RNA polymerase II transcription inhibitor. Core component of the 7SK RNP complex: in cooperation with 7SK snRNA sequesters P-TEFb in a large inactive 7SK snRNP complex preventing RNA polymerase II phosphorylation and subsequent transcriptional elongation. The chain is Protein HEXIM2 (HEXIM2) from Bos taurus (Bovine).